We begin with the raw amino-acid sequence, 188 residues long: Early nodulin-like protein 5 (188 aa).

Positions 1 to 24 (MDSSKKIIIVMFLVTFYMFSCVSS) are cleaved as a signal peptide. Residues 25–128 (TEFEVGGENG…GQKMIVKVME (104 aa)) enclose the Phytocyanin domain. Cysteine 82 and cysteine 116 are oxidised to a cystine. Positions 127 to 157 (METESSTESPPPSSSSSSSSSSSLPASTPKA) are disordered. The segment covering 129–155 (TESSTESPPPSSSSSSSSSSSLPASTP) has biased composition (low complexity). The GPI-anchor amidated serine moiety is linked to residue serine 170. Residues 171 to 188 (SSGFVVSAVLIVSVFGLV) constitute a propeptide, removed in mature form.

It belongs to the early nodulin-like (ENODL) family. As to expression, mostly expressed in leaves and flowers, and, to a lower extent, in stems.

It is found in the cell membrane. May act as a carbohydrate transporter. Mainly required for reproductive functions. This chain is Early nodulin-like protein 5, found in Arabidopsis thaliana (Mouse-ear cress).